The sequence spans 163 residues: Staphylokinase (163 aa).

Positions 1–27 (MLKRSLLFLTVLLLLFSFSSITNEVSA) are cleaved as a signal peptide.

This sequence belongs to the staphylokinase family.

It localises to the secreted. In terms of biological role, potent plasminogen activator that converts plasminogen into plasmin. It forms a 1:1 complex with plasmin, which in turn activates other plasminogen molecules. The sequence is that of Staphylokinase (sak) from Staphylococcus phage phi13 (Bacteriophage phi-13).